The primary structure comprises 1007 residues: Sal-like protein 2 (1007 aa).

The interval 1 to 33 (MSRRKQRKPQQLISDCEGPSASENGDASEEDHP) is disordered. Residues 34-56 (QVCAKCCAQFTDPTEFLAHQNAC) form a C2H2-type 1; atypical zinc finger. 4 disordered regions span residues 59 to 121 (DPPV…GEES), 137 to 177 (GGGL…SGHL), 220 to 243 (PASPSELPGTGTASSTKPLLPLFS), and 286 to 306 (PFSAGGVGRSHKPTPAPSPAL). Low complexity predominate over residues 70 to 80 (ENPNNSSASSE). A compositionally biased stretch (polar residues) spans 99–108 (PPDSGSSVPT). Residues 151–171 (PLPPESTPAPPPPPPPPPPPG) are compositionally biased toward pro residues. Phosphoserine is present on S243. C2H2-type zinc fingers lie at residues 373–395 (HKCRFCAKVFGSDSALQIHLRSH) and 401–423 (YKCNVCGNRFTTRGNLKVHFHRH). Disordered stretches follow at residues 520 to 540 (KNKADENTPPGSEGSAISGVA) and 610 to 629 (AASGAPTTSAPAPSSSASSG). C2H2-type zinc fingers lie at residues 631 to 653 (NQCVICLRVLSCPRALRLHYGQH), 659 to 681 (FKCKVCGRAFSTRGNLRAHFVGH), and 691 to 713 (NSCPICQKKFTNAVTLQQHVRMH). A disordered region spans residues 714 to 886 (LGGQIPNGGT…SALTPEGEAT (173 aa)). Over residues 734 to 744 (ENGSEQSTVSG) the composition is skewed to polar residues. Residues 747 to 757 (SFPQQQSQQPS) are compositionally biased toward low complexity. A compositionally biased stretch (acidic residues) spans 758–782 (PEEELSEEEEEEDEEEEEDVTDEDS). S797, S802, and S806 each carry phosphoserine. The span at 803–812 (EEASGAEEEV) shows a compositional bias: acidic residues. The span at 862–871 (GKEEGGKPER) shows a compositional bias: basic and acidic residues. Residue K911 forms a Glycyl lysine isopeptide (Lys-Gly) (interchain with G-Cter in ubiquitin) linkage. C2H2-type zinc fingers lie at residues 911-933 (KACEVCGQAFPSQAALEEHQKTH) and 940-963 (FTCVFCRQGFLERATLKKHMLLAH).

The protein belongs to the sal C2H2-type zinc-finger protein family. As to expression, highest levels in adult brain (in different areas). Lower levels in heart; very low levels in kidney and pancreas. Expressed throughout the retina and lens vesicle as well as the periocular mesenchyme.

Its subcellular location is the nucleus. In terms of biological role, probable transcription factor that plays a role in eye development before, during, and after optic fissure closure. This Homo sapiens (Human) protein is Sal-like protein 2 (SALL2).